Here is a 450-residue protein sequence, read N- to C-terminus: Membrane-bound lytic murein transglycosylase F 2 (450 aa).

The first 20 residues, 1–20 (MRTWIAILAVVLVLLLNACT), serve as a signal peptide directing secretion. Residues 21 to 261 (DGPEDGPRLE…AMENRYYTYV (241 aa)) are non-LT domain. The tract at residues 262–450 (GEFDFVDLRA…YRDVIRQAFE (189 aa)) is LT domain. Glu-308 is an active-site residue.

In the N-terminal section; belongs to the bacterial solute-binding protein 3 family. This sequence in the C-terminal section; belongs to the transglycosylase Slt family.

It localises to the cell outer membrane. It carries out the reaction Exolytic cleavage of the (1-&gt;4)-beta-glycosidic linkage between N-acetylmuramic acid (MurNAc) and N-acetylglucosamine (GlcNAc) residues in peptidoglycan, from either the reducing or the non-reducing ends of the peptidoglycan chains, with concomitant formation of a 1,6-anhydrobond in the MurNAc residue.. In terms of biological role, murein-degrading enzyme that degrades murein glycan strands and insoluble, high-molecular weight murein sacculi, with the concomitant formation of a 1,6-anhydromuramoyl product. Lytic transglycosylases (LTs) play an integral role in the metabolism of the peptidoglycan (PG) sacculus. Their lytic action creates space within the PG sacculus to allow for its expansion as well as for the insertion of various structures such as secretion systems and flagella. In Alkalilimnicola ehrlichii (strain ATCC BAA-1101 / DSM 17681 / MLHE-1), this protein is Membrane-bound lytic murein transglycosylase F 2.